Consider the following 243-residue polypeptide: Uridylate kinase (243 aa).

14-17 (KLSG) is an ATP binding site. Gly-57 provides a ligand contact to UMP. 2 residues coordinate ATP: Gly-58 and Arg-62. Residues Asp-77 and 139–146 (TGRPYFTT) each bind UMP. 3 residues coordinate ATP: Asn-167, Tyr-173, and Asp-176.

Belongs to the UMP kinase family. As to quaternary structure, homohexamer.

The protein localises to the cytoplasm. It carries out the reaction UMP + ATP = UDP + ADP. It functions in the pathway pyrimidine metabolism; CTP biosynthesis via de novo pathway; UDP from UMP (UMPK route): step 1/1. Inhibited by UTP. Catalyzes the reversible phosphorylation of UMP to UDP. This chain is Uridylate kinase, found in Mycoplasmopsis pulmonis (strain UAB CTIP) (Mycoplasma pulmonis).